The primary structure comprises 370 residues: Anthranilate phosphoribosyltransferase (370 aa).

5-phospho-alpha-D-ribose 1-diphosphate is bound by residues glycine 82, 85-86 (GD), threonine 90, 92-95 (NVST), 110-118 (KHGNRAATS), and serine 122. Glycine 82 is an anthranilate binding site. Serine 94 is a binding site for Mg(2+). Position 113 (asparagine 113) interacts with anthranilate. Arginine 168 provides a ligand contact to anthranilate. The Mg(2+) site is built by aspartate 226 and glutamate 227.

Belongs to the anthranilate phosphoribosyltransferase family. In terms of assembly, homodimer. It depends on Mg(2+) as a cofactor.

It carries out the reaction N-(5-phospho-beta-D-ribosyl)anthranilate + diphosphate = 5-phospho-alpha-D-ribose 1-diphosphate + anthranilate. It functions in the pathway amino-acid biosynthesis; L-tryptophan biosynthesis; L-tryptophan from chorismate: step 2/5. Its function is as follows. Catalyzes the transfer of the phosphoribosyl group of 5-phosphorylribose-1-pyrophosphate (PRPP) to anthranilate to yield N-(5'-phosphoribosyl)-anthranilate (PRA). The sequence is that of Anthranilate phosphoribosyltransferase from Methanosarcina acetivorans (strain ATCC 35395 / DSM 2834 / JCM 12185 / C2A).